We begin with the raw amino-acid sequence, 355 residues long: uncharacterized protein (355 aa).

A helical transmembrane segment spans residues 6-26 (LLTPYFLLSILSVGVFTATAA).

This sequence belongs to the SUN family.

The protein resides in the membrane. This is an uncharacterized protein from Saccharomyces cerevisiae (strain ATCC 204508 / S288c) (Baker's yeast).